The following is a 564-amino-acid chain: 5-aminolevulinate synthase, mitochondrial (564 aa).

Residues 1–57 (MESITKVSMSVCPFVRSTSTQALRQLSQTSGALANQARQCPIAGNAIRAKEISIRSY) constitute a mitochondrion transit peptide. Residues Arg113, Ser226, and Lys245 each coordinate substrate. Pyridoxal 5'-phosphate contacts are provided by Ser278, His306, and Thr350. Lys353 is a catalytic residue. At Lys353 the chain carries N6-(pyridoxal phosphate)lysine. Positions 382 and 383 each coordinate pyridoxal 5'-phosphate. Thr468 provides a ligand contact to substrate.

This sequence belongs to the class-II pyridoxal-phosphate-dependent aminotransferase family. As to quaternary structure, homodimer. The cofactor is pyridoxal 5'-phosphate.

The protein localises to the mitochondrion matrix. It carries out the reaction succinyl-CoA + glycine + H(+) = 5-aminolevulinate + CO2 + CoA. It functions in the pathway porphyrin-containing compound metabolism; protoporphyrin-IX biosynthesis; 5-aminolevulinate from glycine: step 1/1. Functionally, catalyzes the synthesis of 5-aminolevulinate (ALA) from succinyl-CoA and glycine, the first and rate-limiting step in heme biosynthesis. In Candida albicans (strain SC5314 / ATCC MYA-2876) (Yeast), this protein is 5-aminolevulinate synthase, mitochondrial (HEM1).